The following is a 45-amino-acid chain: MSKRTFQPNNRRRAKVHGFRLRMRTRAGRAILSARRTKGRAQISA.

Belongs to the bacterial ribosomal protein bL34 family.

The chain is Large ribosomal subunit protein bL34 from Kineococcus radiotolerans (strain ATCC BAA-149 / DSM 14245 / SRS30216).